Here is a 113-residue protein sequence, read N- to C-terminus: Large ribosomal subunit protein bL19 (113 aa).

This sequence belongs to the bacterial ribosomal protein bL19 family.

Functionally, this protein is located at the 30S-50S ribosomal subunit interface and may play a role in the structure and function of the aminoacyl-tRNA binding site. The polypeptide is Large ribosomal subunit protein bL19 (Mycolicibacterium vanbaalenii (strain DSM 7251 / JCM 13017 / BCRC 16820 / KCTC 9966 / NRRL B-24157 / PYR-1) (Mycobacterium vanbaalenii)).